We begin with the raw amino-acid sequence, 241 residues long: Chloride intracellular channel protein 1 (241 aa).

Ala-2 carries the post-translational modification N-acetylalanine. The required for insertion into the membrane stretch occupies residues 2–90 (AEEQPQVELF…EEFLEAVLCP (89 aa)). Lys-13 is subject to N6-acetyllysine. The G-site signature appears at 24–27 (CPFS). A disulfide bridge connects residues Cys-24 and Cys-59. A helical membrane pass occupies residues 26-46 (FSQRLFMVLWLKGVTFNVTTV). The GST C-terminal domain maps to 93 to 233 (YPKLAALNPE…PDDEEIELAY (141 aa)). Lys-119 is subject to N6-acetyllysine. Residue Ser-121 is modified to Phosphoserine. An N6-acetyllysine modification is found at Lys-131. 2 positions are modified to phosphoserine: Ser-156 and Ser-211. A Phosphotyrosine modification is found at Tyr-233.

This sequence belongs to the chloride channel CLIC family. As to quaternary structure, monomer. Homodimer (in vitro). Interacts with TRAPPC2. Dimerization requires a conformation change that leads to the exposure of a large hydrophobic surface. In vivo, this may lead to membrane insertion.

Its subcellular location is the nucleus. It localises to the nucleus membrane. The protein localises to the cytoplasm. It is found in the cell membrane. The protein resides in the endoplasmic reticulum. The enzyme catalyses L-dehydroascorbate + 2 glutathione = glutathione disulfide + L-ascorbate. The catalysed reaction is chloride(in) = chloride(out). It carries out the reaction iodide(out) = iodide(in). It catalyses the reaction thiocyanate(in) = thiocyanate(out). The enzyme catalyses nitrate(in) = nitrate(out). The catalysed reaction is bromide(in) = bromide(out). It carries out the reaction fluoride(in) = fluoride(out). Functionally, in the soluble state, catalyzes glutaredoxin-like thiol disulfide exchange reactions with reduced glutathione as electron donor. Reduces selenite and dehydroascorbate and may act as an antioxidant during oxidative stress response. Can insert into membranes and form voltage-dependent multi-ion conductive channels. Membrane insertion seems to be redox-regulated and may occur only under oxidizing conditions. Involved in regulation of the cell cycle. This is Chloride intracellular channel protein 1 (CLIC1) from Oryctolagus cuniculus (Rabbit).